The sequence spans 142 residues: MESARENIDLQPGSSDPRSQPINLNHYATKKSVAESMLDVALFMSNAMRLKAVLEQGPSSHYYTTLVTLISLSLLLQVVIGVLLVVIARLNLNEVEKQWRLNQLNNAATILVFFTVVINVFITAFGAHKTGFLAARASRNPL.

A disordered region spans residues 1-21 (MESARENIDLQPGSSDPRSQP). Topologically, residues 1 to 60 (MESARENIDLQPGSSDPRSQPINLNHYATKKSVAESMLDVALFMSNAMRLKAVLEQGPSS) are extracellular. Polar residues predominate over residues 12–21 (PGSSDPRSQP). Positions 25-37 (NHYATKKSVAESM) are helix alpha1. The interval 38 to 57 (LDVALFMSNAMRLKAVLEQG) is helix alpha2. A helical transmembrane segment spans residues 61 to 92 (HYYTTLVTLISLSLLLQVVIGVLLVVIARLNL). At 93–96 (NEVE) the chain is on the cytoplasmic side. The helical transmembrane segment at 97–126 (KQWRLNQLNNAATILVFFTVVINVFITAFG) threads the bilayer. A cholesterol-binding site is contributed by Gln103. Over 127-142 (AHKTGFLAARASRNPL) the chain is Extracellular.

It belongs to the ninjurin family. As to quaternary structure, homooligomer; in response to stimuli, homooligomerizes into filaments. In contrast to NINJ1, the filament is curved toward the intracellular space, preventing its circularization on a relatively flat membrane to mediate plasma membrane rupture: curvature is caused by cholesterol-binding at the cytoplasmic leaflet. Widely expressed. In adult, higher expression in the bone marrow and peripheral blood lymphocytes, medium in the lung, lymph node, thyroid, uterus, thymus, spleen, prostate and skeletal muscle, lower in the liver, placenta, brain, heart and kidney. In embryo, higher expression in the thymus, heart and liver, lower in the spleen, lung, brain and kidney.

It localises to the cell membrane. In terms of biological role, its role in unclear. In contrast to NINJ1 paralog, does not mediate plasma membrane rupture (cytolysis) downstream of necroptotic and pyroptotic programmed cell death. While it is able to oligomerize and form filaments, filaments are curved toward the intracellular space, preventing circularization to mediate plasma membrane rupture. May act as a homophilic transmembrane adhesion molecule involved in nerve regeneration. Promotes axonal growth. This is Ninjurin-2 from Homo sapiens (Human).